Here is a 463-residue protein sequence, read N- to C-terminus: RuvB-like 2 (463 aa).

A2 is subject to N-acetylalanine. K9 is covalently cross-linked (Glycyl lysine isopeptide (Lys-Gly) (interchain with G-Cter in SUMO2)). 77–84 provides a ligand contact to ATP; sequence GQPGTGKT. S437 is subject to Phosphoserine. Residues K444 and K456 each participate in a glycyl lysine isopeptide (Lys-Gly) (interchain with G-Cter in SUMO2) cross-link.

It belongs to the RuvB family. As to quaternary structure, forms homohexameric rings. Can form a dodecamer with RUVBL1 made of two stacked hexameric rings; however, even though RUVBL1 and RUVBL2 are present in equimolar ratio, the oligomeric status of each hexamer is not known. Oligomerization may regulate binding to nucleic acids and conversely, binding to nucleic acids may affect the dodecameric assembly. Interaction of the complex with DHX34 results in conformational changes of the N-terminus of the RUVBL2 subunits, resulting in loss of nucleotide binding ability and ATP hydrolysis of the complex. Interacts with the transcriptional activation domain of MYC. Interacts with ATF2. Component of the RNA polymerase II holoenzyme complex. May also act to bridge the LEF1/TCF1-CTNNB1 complex and TBP. Component of the NuA4 histone acetyltransferase complex which contains the catalytic subunit KAT5/TIP60 and the subunits EP400, TRRAP/PAF400, BRD8/SMAP, EPC1, DMAP1/DNMAP1, RUVBL1/TIP49, RUVBL2, ING3, actin, ACTL6A/BAF53A, MORF4L1/MRG15, MORF4L2/MRGX, MRGBP, YEATS4/GAS41, VPS72/YL1 and MEAF6. The NuA4 complex interacts with MYC and the adenovirus E1A protein. RUVBL2 interacts with EP400. Component of a NuA4-related complex which contains EP400, TRRAP/PAF400, SRCAP, BRD8/SMAP, EPC1, DMAP1/DNMAP1, RUVBL1/TIP49, RUVBL2, actin, ACTL6A/BAF53A, VPS72 and YEATS4/GAS41. Interacts with NPAT. Component of the chromatin-remodeling INO80 complex; specifically part of a complex module associated with the helicase ATP-binding and the helicase C-terminal domain of INO80. Component of some MLL1/MLL complex, at least composed of the core components KMT2A/MLL1, ASH2L, HCFC1/HCF1, WDR5 and RBBP5, as well as the facultative components BACC1, CHD8, E2F6, HSP70, INO80C, KANSL1, LAS1L, MAX, MCRS1, MGA, MYST1/MOF, PELP1, PHF20, PRP31, RING2, RUVB1/TIP49A, RUVB2/TIP49B, SENP3, TAF1, TAF4, TAF6, TAF7, TAF9 and TEX10. Interacts with IGHMBP2. Interacts with TELO2. Interacts with HINT1. Component of a SWR1-like complex. Component of the R2TP complex composed at least of RUVBL1, RUVBL2, RPAP3 and PIHD1. Component of the PAQosome complex which is responsible for the biogenesis of several protein complexes and which consists of R2TP complex members RUVBL1, RUVBL2, RPAP3 and PIH1D1, URI complex members PFDN2, PFDN6, PDRG1, UXT and URI1 as well as ASDURF, POLR2E and DNAAF10/WDR92. Interacts with ITFG1. Interacts with ZMYND10. Interacts with WAC; WAC positively regulates MTOR activity by promoting the assembly of the TTT complex composed of TELO2, TTI1 and TTI2 and the RUVBL complex composed of RUVBL1 and RUVBL2 into the TTT-RUVBL complex which leads to the dimerization of the mTORC1 complex and its subsequent activation. Forms a complex with APPL1 and APPL2. Interacts with ZNHIT2 (via HIT-type zinc finger) in the presence of ATP or ADP; shows a stronger interaction in the presence of ADP. The RUVBL1/RUVBL2 complex interacts with ZNHIT1 (via HIT-type zinc finger), ZNHIT3 (via HIT-type zinc finger), ZNHIT6 (via HIT-type zinc finger) and DDX59/ZNHIT5 (via HIT-type zinc finger) in the presence of ADP. Interacts with NOPCHAP1; the interaction is direct and disrupted upon ATP binding. Interacts with SMG1.

It is found in the nucleus matrix. The protein localises to the nucleus. The protein resides in the nucleoplasm. It localises to the cytoplasm. Its subcellular location is the membrane. It is found in the dynein axonemal particle. The enzyme catalyses ATP + H2O = ADP + phosphate + H(+). Functionally, possesses single-stranded DNA-stimulated ATPase and ATP-dependent DNA helicase (5' to 3') activity; hexamerization is thought to be critical for ATP hydrolysis and adjacent subunits in the ring-like structure contribute to the ATPase activity. Component of the NuA4 histone acetyltransferase complex which is involved in transcriptional activation of select genes principally by acetylation of nucleosomal histones H4 and H2A. This modification may both alter nucleosome-DNA interactions and promote interaction of the modified histones with other proteins which positively regulate transcription. This complex may be required for the activation of transcriptional programs associated with oncogene and proto-oncogene mediated growth induction, tumor suppressor mediated growth arrest and replicative senescence, apoptosis, and DNA repair. The NuA4 complex ATPase and helicase activities seem to be, at least in part, contributed by the association of RUVBL1 and RUVBL2 with EP400. NuA4 may also play a direct role in DNA repair when recruited to sites of DNA damage. Component of a SWR1-like complex that specifically mediates the removal of histone H2A.Z/H2AZ1 from the nucleosome. Proposed core component of the chromatin remodeling INO80 complex which exhibits DNA- and nucleosome-activated ATPase activity and catalyzes ATP-dependent nucleosome sliding. Plays an essential role in oncogenic transformation by MYC and also modulates transcriptional activation by the LEF1/TCF1-CTNNB1 complex. May also inhibit the transcriptional activity of ATF2. Involved in the endoplasmic reticulum (ER)-associated degradation (ERAD) pathway where it negatively regulates expression of ER stress response genes. May play a role in regulating the composition of the U5 snRNP complex. This is RuvB-like 2 (RUVBL2) from Bos taurus (Bovine).